A 504-amino-acid polypeptide reads, in one-letter code: Sphingosine-1-phosphate transporter SPNS2 (504 aa).

The next 11 helical transmembrane spans lie at 48–70 (LLRC…LNYM), 94–114 (GLLQ…FGYL), 122–142 (IILS…SFIT), 182–202 (VMLS…YILG), 214–234 (WALR…LIFV), 269–289 (VFSS…GIWI), 317–337 (LIFG…GAVT), 351–371 (LVCA…FVVA), 375–395 (IVGA…NWAI), 415–435 (FQGF…IGLI), and 460–480 (LCPF…LFFL).

Belongs to the major facilitator superfamily. Spinster (TC 2.A.1.49) family.

The protein localises to the cell membrane. Its subcellular location is the endosome membrane. It catalyses the reaction sphing-4-enine 1-phosphate(in) = sphing-4-enine 1-phosphate(out). The catalysed reaction is sphinganine 1-phosphate(in) = sphinganine 1-phosphate(out). Its function is as follows. Lipid transporter that specifically mediates export of sphingosine-1-phosphate (sphing-4-enine 1-phosphate, S1P) and sphinganine-1-phosphate, which play critical roles in regulating heart development. Mediates the export of S1P from cells in the extraembryonic yolk syncytial layer (YSL), thereby regulating myocardial precursor migration. In Danio rerio (Zebrafish), this protein is Sphingosine-1-phosphate transporter SPNS2.